A 347-amino-acid chain; its full sequence is Heat-inducible transcription repressor HrcA (347 aa).

The protein belongs to the HrcA family.

Its function is as follows. Negative regulator of class I heat shock genes (grpE-dnaK-dnaJ and groELS operons). Prevents heat-shock induction of these operons. The sequence is that of Heat-inducible transcription repressor HrcA from Sphingopyxis alaskensis (strain DSM 13593 / LMG 18877 / RB2256) (Sphingomonas alaskensis).